A 150-amino-acid polypeptide reads, in one-letter code: Large ribosomal subunit protein bL9 (150 aa).

The protein belongs to the bacterial ribosomal protein bL9 family.

Functionally, binds to the 23S rRNA. This is Large ribosomal subunit protein bL9 from Burkholderia thailandensis (strain ATCC 700388 / DSM 13276 / CCUG 48851 / CIP 106301 / E264).